We begin with the raw amino-acid sequence, 204 residues long: Probable molybdenum cofactor guanylyltransferase (204 aa).

Residues 10 to 12 (LSG), Lys22, Asp75, and Asp104 each bind GTP. Asp104 is a Mg(2+) binding site.

The protein belongs to the MobA family. Mg(2+) serves as cofactor.

It localises to the cytoplasm. It catalyses the reaction Mo-molybdopterin + GTP + H(+) = Mo-molybdopterin guanine dinucleotide + diphosphate. Its function is as follows. Transfers a GMP moiety from GTP to Mo-molybdopterin (Mo-MPT) cofactor (Moco or molybdenum cofactor) to form Mo-molybdopterin guanine dinucleotide (Mo-MGD) cofactor. This chain is Probable molybdenum cofactor guanylyltransferase, found in Methanocaldococcus jannaschii (strain ATCC 43067 / DSM 2661 / JAL-1 / JCM 10045 / NBRC 100440) (Methanococcus jannaschii).